The following is a 259-amino-acid chain: 5'-nucleotidase SurE (259 aa).

A divalent metal cation-binding residues include Asp-8, Asp-9, Ser-40, and Asn-92.

This sequence belongs to the SurE nucleotidase family. A divalent metal cation is required as a cofactor.

It is found in the cytoplasm. It carries out the reaction a ribonucleoside 5'-phosphate + H2O = a ribonucleoside + phosphate. Functionally, nucleotidase that shows phosphatase activity on nucleoside 5'-monophosphates. This is 5'-nucleotidase SurE from Xanthomonas axonopodis pv. citri (strain 306).